Reading from the N-terminus, the 390-residue chain is Putative nickel insertion protein (390 aa).

Belongs to the LarC family.

This chain is Putative nickel insertion protein, found in Geobacter metallireducens (strain ATCC 53774 / DSM 7210 / GS-15).